We begin with the raw amino-acid sequence, 602 residues long: Beta-(1--&gt;2)glucan export ATP-binding/permease protein NdvA (602 aa).

An ABC transmembrane type-1 domain is found at 21–311; sequence GWTLAVANLL…VVSFVNSLMM (291 aa). A run of 6 helical transmembrane segments spans residues 22–42, 68–88, 146–166, 167–187, 254–274, and 276–296; these read WTLA…PVLF, LLAA…TVAL, EHFA…YINW, RLAI…TLVV, VITR…GIAL, and QQGL…TLLI. Residues 345–579 enclose the ABC transporter domain; the sequence is VEFLDVSFSY…RGRFAELARA (235 aa). Residue 378-385 participates in ATP binding; that stretch reads GATGAGKS.

The protein belongs to the ABC transporter superfamily. Beta-(1--&gt;2)glucan exporter (TC 3.A.1.108.1) family. In terms of assembly, homodimer.

It localises to the cell inner membrane. It catalyses the reaction [(1-&gt;2)-beta-D-glucosyl](n)(in) + ATP + H2O = [(1-&gt;2)-beta-D-glucosyl](n)(out) + ADP + phosphate + H(+). Functionally, involved in beta-(1--&gt;2)glucan export. Transmembrane domains (TMD) form a pore in the inner membrane and the ATP-binding domain (NBD) is responsible for energy generation. The chain is Beta-(1--&gt;2)glucan export ATP-binding/permease protein NdvA from Rhodopseudomonas palustris (strain BisB5).